A 196-amino-acid polypeptide reads, in one-letter code: ATP-dependent Clp protease proteolytic subunit (196 aa).

The active-site Nucleophile is the S96. H121 is an active-site residue.

Belongs to the peptidase S14 family. As to quaternary structure, fourteen ClpP subunits assemble into 2 heptameric rings which stack back to back to give a disk-like structure with a central cavity, resembling the structure of eukaryotic proteasomes.

The protein localises to the cytoplasm. The catalysed reaction is Hydrolysis of proteins to small peptides in the presence of ATP and magnesium. alpha-casein is the usual test substrate. In the absence of ATP, only oligopeptides shorter than five residues are hydrolyzed (such as succinyl-Leu-Tyr-|-NHMec, and Leu-Tyr-Leu-|-Tyr-Trp, in which cleavage of the -Tyr-|-Leu- and -Tyr-|-Trp bonds also occurs).. Its function is as follows. Cleaves peptides in various proteins in a process that requires ATP hydrolysis. Has a chymotrypsin-like activity. Plays a major role in the degradation of misfolded proteins. The chain is ATP-dependent Clp protease proteolytic subunit from Streptococcus agalactiae serotype III (strain NEM316).